A 61-amino-acid polypeptide reads, in one-letter code: MDFLKKSLFLVLFLGLVSISLCDEEKRQDDDEASEREEKKEIHEEGNQEERRDRPPSWIPK.

The N-terminal stretch at 1–22 (MDFLKKSLFLVLFLGLVSISLC) is a signal peptide. Positions 23–53 (DEEKRQDDDEASEREEKKEIHEEGNQEERRD) are excised as a propeptide. The segment at 25–61 (EKRQDDDEASEREEKKEIHEEGNQEERRDRPPSWIPK) is disordered. Basic and acidic residues predominate over residues 36–55 (REEKKEIHEEGNQEERRDRP). Residue Pro-56 is modified to 4-hydroxyproline; partial.

It belongs to the frog skin active peptide (FSAP) family. Tryptophillin subfamily. As to expression, expressed by the skin glands.

Its subcellular location is the secreted. The chain is Tryptophyllin-T1 from Pithecopus azureus (Orange-legged monkey tree frog).